A 258-amino-acid polypeptide reads, in one-letter code: UPF0246 protein YaaA (258 aa).

This sequence belongs to the UPF0246 family.

This chain is UPF0246 protein YaaA, found in Escherichia coli O157:H7 (strain EC4115 / EHEC).